Here is a 166-residue protein sequence, read N- to C-terminus: Biotin carboxyl carrier protein of acetyl-CoA carboxylase (166 aa).

Polar residues predominate over residues Ser61–Ala70. Residues Ser61 to Gln82 are disordered. Residues Gly90 to Lys166 enclose the Biotinyl-binding domain. At Lys132 the chain carries N6-biotinyllysine.

Homodimer.

Its pathway is lipid metabolism; fatty acid biosynthesis. In terms of biological role, this protein is a component of the acetyl coenzyme A carboxylase complex; first, biotin carboxylase catalyzes the carboxylation of the carrier protein and then the transcarboxylase transfers the carboxyl group to form malonyl-CoA. The chain is Biotin carboxyl carrier protein of acetyl-CoA carboxylase from Streptococcus pyogenes serotype M6 (strain ATCC BAA-946 / MGAS10394).